Reading from the N-terminus, the 237-residue chain is Necrosis-inducing protein NPP1 (237 aa).

The signal sequence occupies residues 1–19 (MNVLTFLIAAAVSLAVVQA). Asn67 is a glycosylation site (N-linked (GlcNAc...) asparagine). Residues 103–113 (AIMYSWYFPKD) carry the Conserved undecapeptide motif motif. A Conserved heptapetpide motif motif is present at residues 120–126 (GHRHDWE).

The protein belongs to the Necrosis inducing protein (NPP1) family.

The protein localises to the secreted. Secreted effector that acts as a pathogen-associated molecular pattern (PAMP) recognized by the plant immune system. Induces necrotic cell death and ethylene biosynthesis in parsley. Stimulates early induced host cellular responses implicated in elicitor signal transmission such as increased levels of cytoplasmic calcium, production of reactive oxygen species (ROS), and MAP kinase activation. Infiltration of NPP1 into leaves of Arabidopsis thaliana results in transcript accumulation of pathogenesis-related (PR) genes, production of ROS and ethylene, callose apposition, and hypersensitive response (HR)-like cell death. NPP1-mediated induction of the PR1 gene is salicylic acid-dependent, and requires both functional NDR1 and PAD4. This chain is Necrosis-inducing protein NPP1, found in Phytophthora nicotianae (Potato buckeye rot agent).